The sequence spans 624 residues: Ceramide transfer protein (624 aa).

The span at 1 to 11 shows a compositional bias: polar residues; the sequence is MSDNQSWNSSG. A disordered region spans residues 1–24; the sequence is MSDNQSWNSSGSEEDPETESGPPV. Residues 23-117 form the PH domain; the sequence is PVERCGVLSK…WVDAIEQHKT (95 aa). Phosphoserine occurs at positions 126, 132, and 135. Residues 202 to 221 form a disordered region; it reads DDEDDFPTTRSDGDFLHNTN. Residues 263–303 are a coiled coil; it reads IELMVKREESWQKRHDREVEKRRRVEEAYKNVMEELKKKPR. The residue at position 315 (Ser-315) is a Phosphoserine. The short motif at 321–327 is the FFAT element; it reads EFFDAVE. Tyr-372 is subject to Phosphotyrosine. Phosphoserine occurs at positions 373, 377, and 380. The region spanning 389–618 is the START domain; the sequence is DVHRFSSQVE…FTSYVQEKTA (230 aa). Residues Glu-472, Gln-493, Asn-530, and Tyr-579 each coordinate an N-acylsphing-4-enine.

Interacts with VAPA and VAPB. Interaction with VAPB is less efficient than with VAPA. Interacts (via FFAT motif) with MOSPD2 (via MSP domain). Post-translationally, phosphorylation on Ser-132 decreases the affinity toward phosphatidylinositol 4-phosphate at Golgi membranes and reduces ceramide transfer activity. Inactivated by hyperphosphorylation of serine residues by CSNK1G2/CK1 that triggers dissociation from the Golgi complex, thus down-regulating ER-to-Golgi transport of ceramide and sphingomyelin synthesis.

The protein resides in the cytoplasm. It localises to the golgi apparatus. Its subcellular location is the endoplasmic reticulum. The catalysed reaction is N-hexadecanoylsphing-4-enine(in) = N-hexadecanoylsphing-4-enine(out). Its function is as follows. Shelters ceramides and diacylglycerol lipids inside its START domain and mediates the intracellular trafficking of ceramides and diacylglycerol lipids in a non-vesicular manner. The protein is Ceramide transfer protein (Cert1) of Mus musculus (Mouse).